A 577-amino-acid chain; its full sequence is MRPSVITVAVLFVQSTWASFAFGNPMSMRNKAHTNDLVNSKGKPLVGRFLHITDMHPDIYYEKGSTVDHYCHSYDHNSDDTPLGKSKVGYLSPGPGYECDSSPALIDKTLEWLKEHQDDVLGGIDFILWTGDNSRHDNDNHFPRTQSEILASNEDLVNKMIEAFPDVPIVSAIGNNDIYPHNIMEAGPSSMTRQLAGAWDALIPYEERHTFEKGSYYLCDVIPDKLAAISINTLYLSNKNAAVDGCPDDNLDEPGSLFMRWFKIQLEAYRLKGMKVWLLGHIPPTRGQWYEDCYTSFTDLLYEFRDIIVGQLYGHMNINHFVFLEFDKLPVDTESYGIKSAQPKYVKSLIDAQYAELPTFPENLTEEFLNGTVGNYSLATVGGSIIPEMFPTFRVYEYNISDIANQLDDREELTEITSFNWETLEEQSQSDYEIDKKKKKKKKNNKKKKKNKRKNIKPGPLGPAYVPSLFTPISFKQYFLNTSNYMDATKDTEISYELLYTSKDSPYNMPDLTVPEYMRLAKRIATCDKPEDPHQFKLQSGDQNTFRISKKKKPSICPIAYTYLWHAYIGSISDFED.

Residues 1–2 lie on the Cytoplasmic side of the membrane; sequence MR. The helical; Signal-anchor for type II membrane protein transmembrane segment at 3–23 threads the bilayer; it reads PSVITVAVLFVQSTWASFAFG. At 24–577 the chain is on the vacuolar side; the sequence is NPMSMRNKAH…YIGSISDFED (554 aa). Asn363, Asn370, Asn375, and Asn399 each carry an N-linked (GlcNAc...) asparagine glycan. Positions 430 to 460 are disordered; the sequence is SDYEIDKKKKKKKKNNKKKKKNKRKNIKPGP. A compositionally biased stretch (basic residues) spans 437–456; it reads KKKKKKKNNKKKKKNKRKNI. Asn481 carries an N-linked (GlcNAc...) asparagine glycan.

This sequence belongs to the endopolyphosphatase PPN1 family. A divalent metal cation serves as cofactor. Post-translationally, processing by proteases in the vacuole may be required for activation.

It is found in the vacuole membrane. The catalysed reaction is [phosphate](n+1) + n H2O = (n+1) phosphate + n H(+). Its function is as follows. Catalyzes the hydrolysis of inorganic polyphosphate (polyP) chains of many hundreds of phosphate residues into shorter lengths. The sequence is that of Endopolyphosphatase (ppn1) from Schizosaccharomyces pombe (strain 972 / ATCC 24843) (Fission yeast).